Here is a 477-residue protein sequence, read N- to C-terminus: Aspartyl/glutamyl-tRNA(Asn/Gln) amidotransferase subunit B (477 aa).

It belongs to the GatB/GatE family. GatB subfamily. As to quaternary structure, heterotrimer of A, B and C subunits.

It catalyses the reaction L-glutamyl-tRNA(Gln) + L-glutamine + ATP + H2O = L-glutaminyl-tRNA(Gln) + L-glutamate + ADP + phosphate + H(+). The catalysed reaction is L-aspartyl-tRNA(Asn) + L-glutamine + ATP + H2O = L-asparaginyl-tRNA(Asn) + L-glutamate + ADP + phosphate + 2 H(+). Its function is as follows. Allows the formation of correctly charged Asn-tRNA(Asn) or Gln-tRNA(Gln) through the transamidation of misacylated Asp-tRNA(Asn) or Glu-tRNA(Gln) in organisms which lack either or both of asparaginyl-tRNA or glutaminyl-tRNA synthetases. The reaction takes place in the presence of glutamine and ATP through an activated phospho-Asp-tRNA(Asn) or phospho-Glu-tRNA(Gln). The polypeptide is Aspartyl/glutamyl-tRNA(Asn/Gln) amidotransferase subunit B (Coxiella burnetii (strain CbuG_Q212) (Coxiella burnetii (strain Q212))).